An 82-amino-acid polypeptide reads, in one-letter code: Polyferredoxin protein FwdG (82 aa).

4Fe-4S ferredoxin-type domains are found at residues 4 to 33 and 51 to 80; these read YELV…PETW and VVTV…LVFK. 8 residues coordinate [4Fe-4S] cluster: C13, C16, C19, C23, C60, C63, C66, and C70.

[4Fe-4S] cluster is required as a cofactor.

This Methanocaldococcus jannaschii (strain ATCC 43067 / DSM 2661 / JAL-1 / JCM 10045 / NBRC 100440) (Methanococcus jannaschii) protein is Polyferredoxin protein FwdG (fwdG).